We begin with the raw amino-acid sequence, 374 residues long: Cyclin-D (374 aa).

It belongs to the cyclin family. Cyclin D subfamily.

The chain is Cyclin-D (CycD) from Ostreococcus tauri.